The sequence spans 76 residues: Small ribosomal subunit protein bS18 (76 aa).

The protein belongs to the bacterial ribosomal protein bS18 family. In terms of assembly, part of the 30S ribosomal subunit. Forms a tight heterodimer with protein bS6.

Its function is as follows. Binds as a heterodimer with protein bS6 to the central domain of the 16S rRNA, where it helps stabilize the platform of the 30S subunit. The polypeptide is Small ribosomal subunit protein bS18 (Desulfitobacterium hafniense (strain Y51)).